Reading from the N-terminus, the 259-residue chain is Type III pantothenate kinase (259 aa).

6-13 (DVGNTNIV) contacts ATP. Residues Tyr-100 and 107-110 (GADR) contribute to the substrate site. Asp-109 serves as the catalytic Proton acceptor. Asp-129 lines the K(+) pocket. Residue Thr-132 coordinates ATP. Thr-184 contributes to the substrate binding site.

This sequence belongs to the type III pantothenate kinase family. As to quaternary structure, homodimer. Requires NH4(+) as cofactor. It depends on K(+) as a cofactor.

It is found in the cytoplasm. It catalyses the reaction (R)-pantothenate + ATP = (R)-4'-phosphopantothenate + ADP + H(+). Its pathway is cofactor biosynthesis; coenzyme A biosynthesis; CoA from (R)-pantothenate: step 1/5. Its function is as follows. Catalyzes the phosphorylation of pantothenate (Pan), the first step in CoA biosynthesis. This chain is Type III pantothenate kinase, found in Clostridium perfringens (strain 13 / Type A).